Consider the following 849-residue polypeptide: Serine/threonine-protein phosphatase 4 regulatory subunit 3B (849 aa).

The WH1 domain maps to 1–100 (MSDTRRRVKV…DEIWEKICQV (100 aa)). 2 positions are modified to phosphoserine: Ser-117 and Ser-695. Over residues 714 to 724 (EMWFNEDEEEE) the composition is skewed to acidic residues. Positions 714 to 849 (EMWFNEDEEE…SPRKRPRLGS (136 aa)) are disordered. The span at 733–764 (EKPKPEDDFPDNYEKFMETKKAKESEDKENLP) shows a compositional bias: basic and acidic residues. The span at 776–818 (FSHSASAANGTNSKSVVAQIPPATSNGSSSKTTNLPTSVTATK) shows a compositional bias: polar residues. Acidic residues predominate over residues 827-838 (YPDDEEEDEEEE). Position 840 is a phosphoserine (Ser-840).

This sequence belongs to the SMEK family. Serine/threonine-protein phosphatase 4 (PP4) occurs in different assemblies of the catalytic and one or more regulatory subunits. Component of the PP4 complex PPP4C-PPP4R2-PPP4R3B. Moderately expressed in tissues and specific brain regions examined.

The protein localises to the cytoplasm. The protein resides in the cytoskeleton. It localises to the microtubule organizing center. It is found in the centrosome. Its subcellular location is the nucleus. Functionally, regulatory subunit of serine/threonine-protein phosphatase 4 (PP4). May regulate the activity of PPP4C at centrosomal microtubule organizing centers. The sequence is that of Serine/threonine-protein phosphatase 4 regulatory subunit 3B from Homo sapiens (Human).